Consider the following 184-residue polypeptide: Zinc metalloproteinase-disintegrin-like ammodytagin (184 aa).

One can recognise a Peptidase M12B domain in the interval 1-90; it reads KSAAXVTLDL…CPAKCIDNKP (90 aa). Asp-20 provides a ligand contact to Ca(2+). Residue His-64 coordinates Zn(2+). Glu-65 is an active-site residue. Zn(2+)-binding residues include His-68 and His-74. Positions 88, 100, 103, 105, and 107 each coordinate Ca(2+). The Disintegrin domain maps to 98-124; the sequence is PAVCGNYFVELTPGSQCADGVCCDQCR. Cystine bridges form between Cys-114-Cys-120 and Cys-165-Cys-177.

Belongs to the venom metalloproteinase (M12B) family. P-III subfamily. P-IIIc sub-subfamily. Heterodimer; disulfide-linked. The cofactor is Zn(2+). The N-terminus is blocked. Post-translationally, N-glycosylated. Expressed by the venom gland.

It localises to the secreted. Inhibited by EDTA, DTT and zinc ions. Partially inhibited by L-cysteine. Not inhibited by 2-propanol or PMSF. Activity is enhanced by calcium or magnesium ions. In terms of biological role, snake venom zinc metalloprotease that has fibrinogenolytic and hemorrhagic activities in mouse and rats. Hydrolyzes the Aalpha-chain (FGA) and more slowly the Bbeta-chain of fibrinogen (FGB), without affecting the gamma-chain. Its hemorrhagic activity results of its involvement in cleavage of basal membrane components (nidogen and fibronectin but not laminin) and depletion of fibrinogen, prothrombin (F2) and factor X (F10) in blood circulation. Also possess potent azocaseinolytic activity and cleaves insulin B-chain, hydrolyzing it at positions Gln(4)-His(5), His(10)-Leu(11) and Tyr(16)-Leu(17). In Vipera ammodytes ammodytes (Western sand viper), this protein is Zinc metalloproteinase-disintegrin-like ammodytagin.